Here is a 282-residue protein sequence, read N- to C-terminus: MTFEPTETLRDPFVLYGESFASRLLLGTARYPSPATLQAAVEASRPAMITVALRRQTAVGSGDGQTLGGETFWQMLRTLGVPVLPNTAGCFTAQEVITTAMMAREVFETDWIKLELIGDDYTLQPDTLNMPAVAETLVKEGFKVLPYCTEDLVLCRRLLDVGCQALMPWAAPIGTGRGAVNPHAMRTLRDRLPDTPLIVDAGLGLPSHAAQVLEWGYDGVLLNTAVAQSAYPVNMARAFALAVEAGRTAYLAGPMPEREVAQASTPVVGMPFWHAEGAEDRA.

The active-site Schiff-base intermediate with DXP is the K113. 1-deoxy-D-xylulose 5-phosphate-binding positions include G174, 201–202, and 223–224; these read AG and NT.

Belongs to the ThiG family. In terms of assembly, homotetramer. Forms heterodimers with either ThiH or ThiS.

The protein localises to the cytoplasm. It carries out the reaction [ThiS sulfur-carrier protein]-C-terminal-Gly-aminoethanethioate + 2-iminoacetate + 1-deoxy-D-xylulose 5-phosphate = [ThiS sulfur-carrier protein]-C-terminal Gly-Gly + 2-[(2R,5Z)-2-carboxy-4-methylthiazol-5(2H)-ylidene]ethyl phosphate + 2 H2O + H(+). It participates in cofactor biosynthesis; thiamine diphosphate biosynthesis. In terms of biological role, catalyzes the rearrangement of 1-deoxy-D-xylulose 5-phosphate (DXP) to produce the thiazole phosphate moiety of thiamine. Sulfur is provided by the thiocarboxylate moiety of the carrier protein ThiS. In vitro, sulfur can be provided by H(2)S. The protein is Thiazole synthase of Cupriavidus metallidurans (strain ATCC 43123 / DSM 2839 / NBRC 102507 / CH34) (Ralstonia metallidurans).